A 742-amino-acid polypeptide reads, in one-letter code: Envelope glycoprotein H (742 aa).

An N-terminal signal peptide occupies residues 1–23 (MRPGLPSYLIILAVCLFSHLLSS). Residues 24–719 (RYGAEAVSEP…VVDATDSRLL (696 aa)) are Virion surface-facing. N-linked (GlcNAc...) asparagine; by host glycosylation is found at Asn55, Asn62, Asn67, and Asn192. Cys195 and Cys211 are disulfide-bonded. The tract at residues 217-280 (YLIDELRYVK…QTEKHELLVL (64 aa)) is interaction with gL. Cystine bridges form between Cys330/Cys383, Cys495/Cys522, and Cys571/Cys624. Residues Asn641 and Asn700 are each glycosylated (N-linked (GlcNAc...) asparagine; by host). A helical membrane pass occupies residues 720-740 (MMSVYALSAIIGIYLLYRMLK). At 741–742 (TC) the chain is on the intravirion side.

This sequence belongs to the herpesviridae glycoprotein H family. In terms of assembly, interacts with glycoprotein L (gL); this interaction is necessary for the correct processing and cell surface expression of gH. The heterodimer gH/gL seems to interact with gB trimers during fusion. Forms the envelope pentamer complex (PC) composed of gH, gL, UL128, UL130, and UL131A. The pentamer interacts with host NRP2. Forms the envelope trimer complex composed of gH, gL, and gO. The trimer interacts with host PDGFRA. The trimer also interacts with host EPHA2. The trimer also interacts with host TGFBR3. Interacts with UL116. N-glycosylated, O-glycosylated, and sialylated.

It localises to the virion membrane. The protein localises to the host cell membrane. It is found in the host endosome membrane. In terms of biological role, the heterodimer glycoprotein H-glycoprotein L is required for the fusion of viral and plasma membranes leading to virus entry into the host cell. Following initial binding to host receptor, membrane fusion is mediated by the fusion machinery composed of gB and the heterodimer gH/gL. May also be involved in the fusion between the virion envelope and the outer nuclear membrane during virion morphogenesis. In human cytomegalovirus, forms two distincts complexes to mediate viral entry, a trimer and a pentamer at the surface of the virion envelope. The gH-gL-gO trimer is required for infection in fibroblasts by interacting with host PDGFRA, and in glioblastoma cells by interacting with host EPHA2. Thsi trimer may also be required in other cell types using host TGFBR3. The gH-gL-UL128-UL130-UL131A pentamer is essential for viral entry in epithelial, endothelial and myeloid cells via interaction with host NRP2. The polypeptide is Envelope glycoprotein H (Human cytomegalovirus (strain Merlin) (HHV-5)).